Reading from the N-terminus, the 180-residue chain is Large ribosomal subunit protein uL6 (180 aa).

This sequence belongs to the universal ribosomal protein uL6 family. In terms of assembly, part of the 50S ribosomal subunit.

In terms of biological role, this protein binds to the 23S rRNA, and is important in its secondary structure. It is located near the subunit interface in the base of the L7/L12 stalk, and near the tRNA binding site of the peptidyltransferase center. The sequence is that of Large ribosomal subunit protein uL6 from Cutibacterium acnes (strain DSM 16379 / KPA171202) (Propionibacterium acnes).